Consider the following 373-residue polypeptide: Transcription factor NF-E2 45 kDa subunit (373 aa).

2 disordered regions span residues 1-22 (MPPC…GELG) and 40-60 (LNVP…PGPL). The required for interaction with MAPK8 stretch occupies residues 1-83 (MPPCPPQPNR…AGFTLPPPPY (83 aa)). Residues 1–206 (MPPCPPQPNR…PPTETPLVLE (206 aa)) are transactivation domain. 2 short sequence motifs (PXY motif) span residues 61 to 65 (PPPTY) and 79 to 83 (PPPPY). The tract at residues 131 to 163 (LPVGQPKPQEDPESDSGLSLNYSDAESLELEGT) is disordered. A Phosphoserine; by MAPK8 modification is found at Ser-157. Ser-170 carries the phosphoserine; by PKA modification. Positions 206 to 225 (ESSSGPVRAKPAVRGEAGSR) are disordered. Positions 266–329 (LVRDIRRRGK…EVMRQQLTEL (64 aa)) constitute a bZIP domain. Positions 268 to 287 (RDIRRRGKNKVAAQNCRKRK) are basic motif. A leucine-zipper region spans residues 291 to 298 (IVQLEREL). Lys-368 participates in a covalent cross-link: Glycyl lysine isopeptide (Lys-Gly) (interchain with G-Cter in SUMO); alternate. A Glycyl lysine isopeptide (Lys-Gly) (interchain with G-Cter in SUMO1); alternate cross-link involves residue Lys-368.

The protein belongs to the bZIP family. CNC subfamily. Homodimer; can bind DNA as a homodimer. Erythroid transcription activator nuclear factor erythroid-derived 2 (NF-E2), composed of a heterodimer of NFE2 and MAFK, possesses transactivation activity on beta-globin. Also forms high affinity heterodimer with MAFG; the interaction promotes erythropoiesis. Interacts (via the PXY motif 1) with ITCH (via the WW 1 domain); the interaction promotes 'Lys63'-linked ubiquitination of NFE2, translocates it to the cytoplasm and inhibits its transactivation activity. Interacts with KMT2D/MLL2; the interaction promotes transactivation of the beta-globin locus. Interacts with MAPK8 (phosphorylated form); the interaction leads to phosphorylation of NFE2 in undifferentiated cells. In terms of processing, phosphorylated on serine residues. In undifferentiated erythrocytes, phosphorylated by MAPK8 which then leads to ubiquitination and protein degradation. Sumoylated. Sumoylation is required for translocation to nuclear bodies PODs, anchoring to the gene loci, and transactivation of the beta-globin gene. Post-translationally, ubiquitinated mainly by 'Lys63'-linked ubiquitin. Polyubiquitination with 'Lys63'-linked ubiquitin by ITCH retains NFE2 in the cytoplasm preventing its transactivation activity. In undifferentiated erythrocyte, ubiquitinated after MAPK8-mediatd phosphorylation leading to protein degradation.

Its subcellular location is the nucleus. The protein localises to the PML body. The protein resides in the cytoplasm. Component of the NF-E2 complex essential for regulating erythroid and megakaryocytic maturation and differentiation. Binds to the hypersensitive site 2 (HS2) of the beta-globin control region (LCR). This subunit (NFE2) recognizes the TCAT/C sequence of the AP-1-like core palindrome present in a number of erythroid and megakaryocytic gene promoters. Requires MAFK or other small MAF proteins for binding to the NF-E2 motif. May play a role in all aspects of hemoglobin production from globin and heme synthesis to procurement of iron. This Rattus norvegicus (Rat) protein is Transcription factor NF-E2 45 kDa subunit (Nfe2).